We begin with the raw amino-acid sequence, 122 residues long: MTCAQWLWKKIIALYEQAAECDGEVVRPKEPNWTAWANEIRLMCVQDGRTHKQICEMYSRVSRDPFWCRNVLSPSKLREKWDELSLRLSPSVSTYTEKREDPYFKASYDNVDYSQIPAGFRG.

Belongs to the phage O protein family.

This is an uncharacterized protein from Escherichia coli O6:H1 (strain CFT073 / ATCC 700928 / UPEC).